A 500-amino-acid polypeptide reads, in one-letter code: Cytochrome P450 11B2, mitochondrial (500 aa).

Residues 1 to 24 (MALRAKADVWLARPWQCLPRTRAL) constitute a mitochondrion transit peptide. Phe-381 lines the 21-hydroxyprogesterone pocket. Cys-447 contacts heme.

It belongs to the cytochrome P450 family. Requires heme as cofactor. As to expression, adrenal gland.

It is found in the mitochondrion inner membrane. The enzyme catalyses a steroid + 2 reduced [adrenodoxin] + O2 + 2 H(+) = an 11beta-hydroxysteroid + 2 oxidized [adrenodoxin] + H2O. It carries out the reaction 21-hydroxyprogesterone + 2 reduced [adrenodoxin] + O2 + 2 H(+) = corticosterone + 2 oxidized [adrenodoxin] + H2O. The catalysed reaction is corticosterone + 2 reduced [adrenodoxin] + O2 + 2 H(+) = 18-hydroxycorticosterone + 2 oxidized [adrenodoxin] + H2O. It catalyses the reaction 18-hydroxycorticosterone + 2 reduced [adrenodoxin] + O2 + 2 H(+) = aldosterone + 2 oxidized [adrenodoxin] + 2 H2O. The enzyme catalyses 11-deoxycortisol + 2 reduced [adrenodoxin] + O2 + 2 H(+) = cortisol + 2 oxidized [adrenodoxin] + H2O. It carries out the reaction 21-hydroxyprogesterone + 2 reduced [adrenodoxin] + O2 + 2 H(+) = 18-hydroxy-11-deoxycorticosterone + 2 oxidized [adrenodoxin] + H2O. The catalysed reaction is cortisol + 2 reduced [adrenodoxin] + O2 + 2 H(+) = 18-hydroxycortisol + 2 oxidized [adrenodoxin] + H2O. It catalyses the reaction 18-hydroxycortisol + 2 reduced [adrenodoxin] + O2 + 2 H(+) = 18-oxocortisol + 2 oxidized [adrenodoxin] + 2 H2O. It participates in steroid biosynthesis. Functionally, a cytochrome P450 monooxygenase that catalyzes the biosynthesis of aldosterone, the main mineralocorticoid in the human body responsible for salt and water homeostasis, thus involved in blood pressure regulation, arterial hypertension, and the development of heart failure. Catalyzes three sequential oxidative reactions of 11-deoxycorticosterone (21-hydroxyprogesterone), namely 11-beta hydroxylation, followed by two successive oxidations at C18 yielding 18-hydroxy and then 18-oxo intermediates (that would not leave the enzyme active site during the consecutive hydroxylation reactions), ending with the formation of aldosterone. Can also produce 18-hydroxycortisol and 18-oxocortisol, derived from successive oxidations of cortisol at C18, normally found at very low levels, but significantly increased in primary aldosteronism, the most common form of secondary hypertension. Mechanistically, uses molecular oxygen inserting one oxygen atom into a substrate and reducing the second into a water molecule. Two electrons are provided by NADPH via a two-protein mitochondrial transfer system comprising flavoprotein FDXR (adrenodoxin/ferredoxin reductase) and nonheme iron-sulfur protein FDX1 or FDX2 (adrenodoxin/ferredoxin). Could also be involved in the androgen metabolic pathway. This is Cytochrome P450 11B2, mitochondrial (CYP11B2) from Mesocricetus auratus (Golden hamster).